A 167-amino-acid chain; its full sequence is Ribosome maturation factor RimM (167 aa).

Residues 94 to 165 (ENEYYYSDII…TIRITPMEGL (72 aa)) enclose the PRC barrel domain.

This sequence belongs to the RimM family. Binds ribosomal protein uS19.

It is found in the cytoplasm. Functionally, an accessory protein needed during the final step in the assembly of 30S ribosomal subunit, possibly for assembly of the head region. Essential for efficient processing of 16S rRNA. May be needed both before and after RbfA during the maturation of 16S rRNA. It has affinity for free ribosomal 30S subunits but not for 70S ribosomes. This chain is Ribosome maturation factor RimM, found in Staphylococcus haemolyticus (strain JCSC1435).